The chain runs to 353 residues: Chorismate synthase (353 aa).

Arginine 48 serves as a coordination point for NADP(+). FMN is bound by residues 125–127, 238–239, glycine 278, 293–297, and arginine 319; these read RSS, NA, and KPTSS.

The protein belongs to the chorismate synthase family. Homotetramer. FMNH2 serves as cofactor.

The catalysed reaction is 5-O-(1-carboxyvinyl)-3-phosphoshikimate = chorismate + phosphate. The protein operates within metabolic intermediate biosynthesis; chorismate biosynthesis; chorismate from D-erythrose 4-phosphate and phosphoenolpyruvate: step 7/7. Its function is as follows. Catalyzes the anti-1,4-elimination of the C-3 phosphate and the C-6 proR hydrogen from 5-enolpyruvylshikimate-3-phosphate (EPSP) to yield chorismate, which is the branch point compound that serves as the starting substrate for the three terminal pathways of aromatic amino acid biosynthesis. This reaction introduces a second double bond into the aromatic ring system. In Buchnera aphidicola subsp. Cinara cedri (strain Cc), this protein is Chorismate synthase.